The following is a 265-amino-acid chain: Triosephosphate isomerase (265 aa).

8–10 (NWK) is a binding site for substrate. Residue His103 is the Electrophile of the active site. Glu182 acts as the Proton acceptor in catalysis. Substrate-binding positions include Gly188, Ser226, and 247 to 248 (GG).

The protein belongs to the triosephosphate isomerase family. As to quaternary structure, homodimer.

The protein resides in the cytoplasm. It carries out the reaction D-glyceraldehyde 3-phosphate = dihydroxyacetone phosphate. It participates in carbohydrate biosynthesis; gluconeogenesis. The protein operates within carbohydrate degradation; glycolysis; D-glyceraldehyde 3-phosphate from glycerone phosphate: step 1/1. Its function is as follows. Involved in the gluconeogenesis. Catalyzes stereospecifically the conversion of dihydroxyacetone phosphate (DHAP) to D-glyceraldehyde-3-phosphate (G3P). The chain is Triosephosphate isomerase from Psychrobacter sp. (strain PRwf-1).